The chain runs to 352 residues: B1 bradykinin receptor (352 aa).

Residues 1–41 (MASWPPLELQSSNQSQLFPQNATACDNAPEAWDLLHRVLPT) lie on the Extracellular side of the membrane. Residues Asn13 and Asn21 are each glycosylated (N-linked (GlcNAc...) asparagine). A helical membrane pass occupies residues 42 to 62 (FIISICSFGLLGNLFVLLVFL). The Cytoplasmic segment spans residues 63-72 (LPRRRLNVAE). A helical transmembrane segment spans residues 73–93 (IYLANLAASDLVFVLGLPFWA). Over 94 to 110 (ENIWNQFNWPFGALLCR) the chain is Extracellular. A disulfide bridge links Cys109 with Cys188. A helical membrane pass occupies residues 111-131 (GINGVIKANLFISIFLVVAIS). Over 132–153 (QDRYCLLVHPMASRRRQRRRQA) the chain is Cytoplasmic. The chain crosses the membrane as a helical span at residues 154-174 (RVTCVLIWVVGGLLSIPTFLL). At 175–206 (RSIQAVPDLNITACILLLPHEAWHFARIVELN) the chain is on the extracellular side. An N-linked (GlcNAc...) asparagine glycan is attached at Asn184. A helical membrane pass occupies residues 207 to 227 (ILAFLLPLAAIVFFNYHILAS). The Cytoplasmic portion of the chain corresponds to 228 to 250 (LRGREEVSRTRCGGRKDSKTTAL). A helical transmembrane segment spans residues 251 to 271 (ILTLVVAFLVCWAPYHFFAFL). Over 272-294 (EFLFQVQAIRSCFWEDFIDLGLQ) the chain is Extracellular. Residues 295-315 (LANFLAFTNSSLNPVIYVFVG) form a helical membrane-spanning segment. Over 316 to 352 (RLFRTKVWELYKQCTPKSLAPISSSHRKEIFQLFWRN) the chain is Cytoplasmic. The S-palmitoyl cysteine moiety is linked to residue Cys329.

It belongs to the G-protein coupled receptor 1 family. Bradykinin receptor subfamily. BDKRB1 sub-subfamily.

The protein localises to the cell membrane. This is a receptor for bradykinin. Could be a factor in chronic pain and inflammation. This is B1 bradykinin receptor (BDKRB1) from Chlorocebus pygerythrus (Vervet monkey).